A 431-amino-acid chain; its full sequence is MKQYIPIESVFAREILDSRGNPTVEVEVIAEGGFIGRASVPSGASTGAFEAVELRDENSGRYMGKGVETAVDNVNNTIAPEVEGMNVFDQVAVDKLMIDLDGTPNKERLGANAILGVSLAVAKAAAEALGLGLYQYIGGVNAKTLPVPMMNIINGGKHADNSVNIQEFMIMPVGAENFKEALRMCAEVFHNLKKVLHSKGLSTAVGDEGGFAPNLETDEQAIQVILEAVEKAGYKPGNDFRIAIDAAATEMYQEDGSYFFWKSNIRKSKEEMVDYWADLAGKYPIISLEDGVSEEDWEGWKLLTERLGSKIQLVGDDLFVTNTKRLEKGIKQGVANSILIKVNQIGTLTETLDAIQMANRAGYTAVTSHRSGETEDATIADIAVATNSGQIKTGAPSRTDRVAKYNQLLRIEEELGEVAEFPGLKAWYNLK.

(2R)-2-phosphoglycerate is bound at residue Q166. The active-site Proton donor is the E208. Mg(2+)-binding residues include D245, E289, and D316. (2R)-2-phosphoglycerate contacts are provided by K341, R370, S371, and K392. Catalysis depends on K341, which acts as the Proton acceptor.

Belongs to the enolase family. The cofactor is Mg(2+).

It localises to the cytoplasm. Its subcellular location is the secreted. The protein resides in the cell surface. The enzyme catalyses (2R)-2-phosphoglycerate = phosphoenolpyruvate + H2O. It participates in carbohydrate degradation; glycolysis; pyruvate from D-glyceraldehyde 3-phosphate: step 4/5. Functionally, catalyzes the reversible conversion of 2-phosphoglycerate (2-PG) into phosphoenolpyruvate (PEP). It is essential for the degradation of carbohydrates via glycolysis. The sequence is that of Enolase from Ruminiclostridium cellulolyticum (strain ATCC 35319 / DSM 5812 / JCM 6584 / H10) (Clostridium cellulolyticum).